The following is a 115-amino-acid chain: uncharacterized protein (115 aa).

Positions 1 to 115 (MGVEISLDPP…ETVIKLSAAE (115 aa)) constitute an MSP domain.

This is an uncharacterized protein from Caenorhabditis elegans.